Here is a 1293-residue protein sequence, read N- to C-terminus: Late blight resistance protein R1-A (1293 aa).

Coiled-coil stretches lie at residues 423–446 (RYSD…ESLQ) and 538–560 (PRMN…KLLN). Residues 539–826 (RMNEEIVGFE…SEAFIKSSEG (288 aa)) enclose the NB-ARC domain. ATP is bound at residue 572 to 579 (GMPGLGKT). LRR repeat units follow at residues 876 to 899 (AEEN…VYSH), 956 to 981 (FKFL…VYLK), 1027 to 1049 (MVKL…LLEN), 1056 to 1079 (LETL…KTPN), 1102 to 1125 (PIRL…ISAP), 1149 to 1172 (LKHL…KVSN), 1175 to 1197 (FPQL…ADDA), 1198 to 1222 (FPNL…FMDI), and 1235 to 1259 (ESVV…NFKL).

Belongs to the disease resistance NB-LRR family.

It localises to the cytoplasm. Its subcellular location is the membrane. Functionally, confers resistance to late blight (Phytophthora infestans) races carrying the avirulence gene Avr1. Resistance proteins guard the plant against pathogens that contain an appropriate avirulence protein via an indirect interaction with this avirulence protein. That triggers a defense system including the hypersensitive response, which restricts the pathogen growth. This chain is Late blight resistance protein R1-A (R1A), found in Solanum demissum (Wild potato).